The primary structure comprises 568 residues: NADH-ubiquinone oxidoreductase chain 5 (568 aa).

A run of 14 helical transmembrane segments spans residues 7-27, 44-64, 90-110, 144-164, 165-185, 210-232, 240-260, 274-294, 297-317, 334-354, 378-398, 426-446, 452-472, and 547-567; these read LGLLMLILTGYLFIFTGSSFG, FSFSFLLDNVSMIFVGTVLVI, WLFVLSMVFMILVPNLLMLLI, IGDVLVLISISIFLSEGGWLI, YSYHPVQMWLNLGFMVVFAGM, LVHSSTLVTAGVYLVLRSFYIIS, VLMILSLFTLVLAGSSAVFAF, LSLMMFSISILLPSVAFFHLV, AVFKALLFLGAGGVIHSNQSI, MGAMSVAIVSLSGAPFMSGFF, LLGLIFTSFYSARIVFSVMLG, AIILGVVLGSKMESFGFVVVL, LSVFFIPFAGLILWRGVISKL, and FTYQLVVWGLLVAGGVSLIIF.

It belongs to the complex I subunit 5 family.

The protein localises to the mitochondrion inner membrane. The enzyme catalyses a ubiquinone + NADH + 5 H(+)(in) = a ubiquinol + NAD(+) + 4 H(+)(out). Core subunit of the mitochondrial membrane respiratory chain NADH dehydrogenase (Complex I) that is believed to belong to the minimal assembly required for catalysis. Complex I functions in the transfer of electrons from NADH to the respiratory chain. The immediate electron acceptor for the enzyme is believed to be ubiquinone. The polypeptide is NADH-ubiquinone oxidoreductase chain 5 (ND5) (Mytilus edulis (Blue mussel)).